The chain runs to 300 residues: Acetyl-coenzyme A carboxylase carboxyl transferase subunit beta 2 (300 aa).

One can recognise a CoA carboxyltransferase N-terminal domain in the interval 26–294; it reads VWIKCPSCRE…ATAHKSEPIV (269 aa). C30, C33, C49, and C51 together coordinate Zn(2+). The C4-type zinc finger occupies 30 to 51; it reads CPSCRELIYHKQLAERMKVCRC.

It belongs to the AccD/PCCB family. Acetyl-CoA carboxylase is a heterohexamer composed of biotin carboxyl carrier protein (AccB), biotin carboxylase (AccC) and two subunits each of ACCase subunit alpha (AccA) and ACCase subunit beta (AccD). The cofactor is Zn(2+).

It localises to the cytoplasm. The enzyme catalyses N(6)-carboxybiotinyl-L-lysyl-[protein] + acetyl-CoA = N(6)-biotinyl-L-lysyl-[protein] + malonyl-CoA. The protein operates within lipid metabolism; malonyl-CoA biosynthesis; malonyl-CoA from acetyl-CoA: step 1/1. Functionally, component of the acetyl coenzyme A carboxylase (ACC) complex. Biotin carboxylase (BC) catalyzes the carboxylation of biotin on its carrier protein (BCCP) and then the CO(2) group is transferred by the transcarboxylase to acetyl-CoA to form malonyl-CoA. The polypeptide is Acetyl-coenzyme A carboxylase carboxyl transferase subunit beta 2 (Roseiflexus sp. (strain RS-1)).